We begin with the raw amino-acid sequence, 151 residues long: Nucleoside diphosphate kinase (151 aa).

Lysine 11, phenylalanine 59, arginine 87, threonine 93, arginine 104, and asparagine 114 together coordinate ATP. Catalysis depends on histidine 117, which acts as the Pros-phosphohistidine intermediate.

Belongs to the NDK family. As to quaternary structure, homotetramer. Mg(2+) serves as cofactor.

It localises to the cytoplasm. It catalyses the reaction a 2'-deoxyribonucleoside 5'-diphosphate + ATP = a 2'-deoxyribonucleoside 5'-triphosphate + ADP. It carries out the reaction a ribonucleoside 5'-diphosphate + ATP = a ribonucleoside 5'-triphosphate + ADP. Major role in the synthesis of nucleoside triphosphates other than ATP. The ATP gamma phosphate is transferred to the NDP beta phosphate via a ping-pong mechanism, using a phosphorylated active-site intermediate. This Prochlorococcus marinus (strain SARG / CCMP1375 / SS120) protein is Nucleoside diphosphate kinase.